Here is a 202-residue protein sequence, read N- to C-terminus: Holliday junction branch migration complex subunit RuvA (202 aa).

A domain I region spans residues 1 to 64; sequence MISRLRGTVL…EDAFDLFGFL (64 aa). Positions 65 to 143 are domain II; the sequence is TKGEEEVFLL…TIHLEAVSRG (79 aa). Positions 143 to 147 are flexible linker; the sequence is GTAPA. Positions 148–202 are domain III; sequence AVSGAHADLVSALLNLGYKQPQAEKAADLASERLGAEATFQALFREALKALRSGG.

Belongs to the RuvA family. In terms of assembly, homotetramer. Forms an RuvA(8)-RuvB(12)-Holliday junction (HJ) complex. HJ DNA is sandwiched between 2 RuvA tetramers; dsDNA enters through RuvA and exits via RuvB. An RuvB hexamer assembles on each DNA strand where it exits the tetramer. Each RuvB hexamer is contacted by two RuvA subunits (via domain III) on 2 adjacent RuvB subunits; this complex drives branch migration. In the full resolvosome a probable DNA-RuvA(4)-RuvB(12)-RuvC(2) complex forms which resolves the HJ.

It is found in the cytoplasm. Functionally, the RuvA-RuvB-RuvC complex processes Holliday junction (HJ) DNA during genetic recombination and DNA repair, while the RuvA-RuvB complex plays an important role in the rescue of blocked DNA replication forks via replication fork reversal (RFR). RuvA specifically binds to HJ cruciform DNA, conferring on it an open structure. The RuvB hexamer acts as an ATP-dependent pump, pulling dsDNA into and through the RuvAB complex. HJ branch migration allows RuvC to scan DNA until it finds its consensus sequence, where it cleaves and resolves the cruciform DNA. This Myxococcus xanthus (strain DK1622) protein is Holliday junction branch migration complex subunit RuvA.